Here is a 374-residue protein sequence, read N- to C-terminus: Alanine racemase (374 aa).

The Proton acceptor; specific for D-alanine role is filled by lysine 40. Lysine 40 bears the N6-(pyridoxal phosphate)lysine mark. Arginine 136 is a binding site for substrate. Tyrosine 264 (proton acceptor; specific for L-alanine) is an active-site residue. A substrate-binding site is contributed by methionine 311.

This sequence belongs to the alanine racemase family. Pyridoxal 5'-phosphate serves as cofactor.

The enzyme catalyses L-alanine = D-alanine. Its pathway is amino-acid biosynthesis; D-alanine biosynthesis; D-alanine from L-alanine: step 1/1. Catalyzes the interconversion of L-alanine and D-alanine. May also act on other amino acids. The polypeptide is Alanine racemase (alr) (Pediococcus pentosaceus (strain ATCC 25745 / CCUG 21536 / LMG 10740 / 183-1w)).